The sequence spans 257 residues: NAD-capped RNA hydrolase NudC (257 aa).

Substrate contacts are provided by K25 and R69. The Zn(2+) site is built by C98 and C101. E111 contributes to the substrate binding site. Zn(2+)-binding residues include C116 and C119. Y124 is a binding site for substrate. The 124-residue stretch at 125-248 (PQIAPCIIVA…TVARRLIEDT (124 aa)) folds into the Nudix hydrolase domain. A158, E174, and E178 together coordinate a divalent metal cation. The Nudix box signature appears at 159–180 (GFVEVGETLEQAVAREVMEESG). 192–199 (QPWPFPQS) provides a ligand contact to substrate. A divalent metal cation is bound at residue E219. A241 contributes to the substrate binding site.

This sequence belongs to the Nudix hydrolase family. NudC subfamily. As to quaternary structure, homodimer. The cofactor is Mg(2+). It depends on Mn(2+) as a cofactor. Zn(2+) serves as cofactor.

It catalyses the reaction a 5'-end NAD(+)-phospho-ribonucleoside in mRNA + H2O = a 5'-end phospho-adenosine-phospho-ribonucleoside in mRNA + beta-nicotinamide D-ribonucleotide + 2 H(+). The enzyme catalyses NAD(+) + H2O = beta-nicotinamide D-ribonucleotide + AMP + 2 H(+). The catalysed reaction is NADH + H2O = reduced beta-nicotinamide D-ribonucleotide + AMP + 2 H(+). Its function is as follows. mRNA decapping enzyme that specifically removes the nicotinamide adenine dinucleotide (NAD) cap from a subset of mRNAs by hydrolyzing the diphosphate linkage to produce nicotinamide mononucleotide (NMN) and 5' monophosphate mRNA. The NAD-cap is present at the 5'-end of some mRNAs and stabilizes RNA against 5'-processing. Has preference for mRNAs with a 5'-end purine. Catalyzes the hydrolysis of a broad range of dinucleotide pyrophosphates. In Shigella dysenteriae serotype 1 (strain Sd197), this protein is NAD-capped RNA hydrolase NudC.